The sequence spans 478 residues: Protein nucleotidyltransferase YdiU (478 aa).

ATP contacts are provided by glycine 84, glycine 86, arginine 87, lysine 107, aspartate 119, glycine 120, arginine 170, and arginine 177. The active-site Proton acceptor is the aspartate 246. 2 residues coordinate Mg(2+): asparagine 247 and aspartate 256. Aspartate 256 serves as a coordination point for ATP.

The protein belongs to the SELO family. Requires Mg(2+) as cofactor. Mn(2+) serves as cofactor.

It carries out the reaction L-seryl-[protein] + ATP = 3-O-(5'-adenylyl)-L-seryl-[protein] + diphosphate. It catalyses the reaction L-threonyl-[protein] + ATP = 3-O-(5'-adenylyl)-L-threonyl-[protein] + diphosphate. The catalysed reaction is L-tyrosyl-[protein] + ATP = O-(5'-adenylyl)-L-tyrosyl-[protein] + diphosphate. The enzyme catalyses L-histidyl-[protein] + UTP = N(tele)-(5'-uridylyl)-L-histidyl-[protein] + diphosphate. It carries out the reaction L-seryl-[protein] + UTP = O-(5'-uridylyl)-L-seryl-[protein] + diphosphate. It catalyses the reaction L-tyrosyl-[protein] + UTP = O-(5'-uridylyl)-L-tyrosyl-[protein] + diphosphate. In terms of biological role, nucleotidyltransferase involved in the post-translational modification of proteins. It can catalyze the addition of adenosine monophosphate (AMP) or uridine monophosphate (UMP) to a protein, resulting in modifications known as AMPylation and UMPylation. The chain is Protein nucleotidyltransferase YdiU from Escherichia coli O6:K15:H31 (strain 536 / UPEC).